Consider the following 382-residue polypeptide: Galactokinase (382 aa).

34 to 37 (EHTD) contributes to the substrate binding site. Residue 124 to 130 (GAGLSSS) coordinates ATP. Mg(2+) contacts are provided by serine 130 and glutamate 162. Aspartate 174 acts as the Proton acceptor in catalysis. Tyrosine 223 is a substrate binding site.

Belongs to the GHMP kinase family. GalK subfamily.

Its subcellular location is the cytoplasm. The enzyme catalyses alpha-D-galactose + ATP = alpha-D-galactose 1-phosphate + ADP + H(+). The protein operates within carbohydrate metabolism; galactose metabolism. Catalyzes the transfer of the gamma-phosphate of ATP to D-galactose to form alpha-D-galactose-1-phosphate (Gal-1-P). The protein is Galactokinase of Shigella flexneri.